We begin with the raw amino-acid sequence, 472 residues long: Adenosylhomocysteinase (472 aa).

Substrate is bound by residues T62, D137, and E197. NAD(+) is bound at residue 198–200; the sequence is TTT. Residues K227 and D231 each contribute to the substrate site. Residues N232, 261 to 266, E284, N319, 340 to 342, and N385 contribute to the NAD(+) site; these read GYGDVG and IGH.

This sequence belongs to the adenosylhomocysteinase family. NAD(+) is required as a cofactor.

The protein resides in the cytoplasm. The enzyme catalyses S-adenosyl-L-homocysteine + H2O = L-homocysteine + adenosine. It functions in the pathway amino-acid biosynthesis; L-homocysteine biosynthesis; L-homocysteine from S-adenosyl-L-homocysteine: step 1/1. Its function is as follows. May play a key role in the regulation of the intracellular concentration of adenosylhomocysteine. This chain is Adenosylhomocysteinase, found in Bordetella pertussis (strain Tohama I / ATCC BAA-589 / NCTC 13251).